A 340-amino-acid chain; its full sequence is Cathepsin S (340 aa).

An N-terminal signal peptide occupies residues 1–17; sequence MRAPGHAAIRWLFWMPL. Positions 18–122 are cleaved as a propeptide — activation peptide; sequence VCSVAMEQLQ…VTFRSYSNRT (105 aa). N-linked (GlcNAc...) asparagine glycosylation occurs at asparagine 120. Intrachain disulfides connect cysteine 134–cysteine 233, cysteine 144–cysteine 189, cysteine 178–cysteine 222, and cysteine 281–cysteine 329. Cysteine 147 is a catalytic residue. Residues histidine 287 and asparagine 307 contribute to the active site.

It belongs to the peptidase C1 family. Widely expressed with highest expression found in non-skeletal tissues. Relatively high levels found in skeletal tissues. Expressed in spleen, B cells, dendritic cells and macrophages.

Its subcellular location is the lysosome. It is found in the secreted. The protein resides in the cytoplasmic vesicle. It localises to the phagosome. It carries out the reaction Similar to cathepsin L, but with much less activity on Z-Phe-Arg-|-NHMec, and more activity on the Z-Val-Val-Arg-|-Xaa compound.. Thiol protease. Key protease responsible for the removal of the invariant chain from MHC class II molecules and MHC class II antigen presentation. The bond-specificity of this proteinase is in part similar to the specificities of cathepsin L. This Mus musculus (Mouse) protein is Cathepsin S (Ctss).